Consider the following 188-residue polypeptide: Peptidyl-tRNA hydrolase (188 aa).

F15 serves as a coordination point for tRNA. H20 acts as the Proton acceptor in catalysis. Positions 64, 66, and 112 each coordinate tRNA.

Belongs to the PTH family. Monomer.

Its subcellular location is the cytoplasm. The catalysed reaction is an N-acyl-L-alpha-aminoacyl-tRNA + H2O = an N-acyl-L-amino acid + a tRNA + H(+). Its function is as follows. Hydrolyzes ribosome-free peptidyl-tRNAs (with 1 or more amino acids incorporated), which drop off the ribosome during protein synthesis, or as a result of ribosome stalling. Catalyzes the release of premature peptidyl moieties from peptidyl-tRNA molecules trapped in stalled 50S ribosomal subunits, and thus maintains levels of free tRNAs and 50S ribosomes. The sequence is that of Peptidyl-tRNA hydrolase from Borrelia turicatae (strain 91E135).